Reading from the N-terminus, the 260-residue chain is Acetylglutamate kinase (260 aa).

Substrate contacts are provided by residues 46–47 (GG), Arg68, and Asn160.

It belongs to the acetylglutamate kinase family. ArgB subfamily.

The protein resides in the cytoplasm. It catalyses the reaction N-acetyl-L-glutamate + ATP = N-acetyl-L-glutamyl 5-phosphate + ADP. It functions in the pathway amino-acid biosynthesis; L-arginine biosynthesis; N(2)-acetyl-L-ornithine from L-glutamate: step 2/4. In terms of biological role, catalyzes the ATP-dependent phosphorylation of N-acetyl-L-glutamate. This Shewanella baltica (strain OS223) protein is Acetylglutamate kinase.